Reading from the N-terminus, the 394-residue chain is Ribulose bisphosphate carboxylase large chain (394 aa).

N6,N6,N6-trimethyllysine is present on K5. N114 and T164 together coordinate substrate. Residue K166 is the Proton acceptor of the active site. K168 lines the substrate pocket. Residues K192, D194, and E195 each contribute to the Mg(2+) site. K192 carries the N6-carboxylysine modification. The Proton acceptor role is filled by H285. R286, H318, and S370 together coordinate substrate.

This sequence belongs to the RuBisCO large chain family. Type I subfamily. In terms of assembly, heterohexadecamer of 8 large chains and 8 small chains. It depends on Mg(2+) as a cofactor.

The protein localises to the plastid. It localises to the chloroplast. The catalysed reaction is 2 (2R)-3-phosphoglycerate + 2 H(+) = D-ribulose 1,5-bisphosphate + CO2 + H2O. It catalyses the reaction D-ribulose 1,5-bisphosphate + O2 = 2-phosphoglycolate + (2R)-3-phosphoglycerate + 2 H(+). In terms of biological role, ruBisCO catalyzes two reactions: the carboxylation of D-ribulose 1,5-bisphosphate, the primary event in carbon dioxide fixation, as well as the oxidative fragmentation of the pentose substrate in the photorespiration process. Both reactions occur simultaneously and in competition at the same active site. This Victoria cruziana (Santa Cruz water lily) protein is Ribulose bisphosphate carboxylase large chain (rbcL).